A 32-amino-acid chain; its full sequence is Cytochrome b6-f complex subunit 7 (32 aa).

A helical membrane pass occupies residues 9-27; that stretch reads AAVFWILIPIGLVGGALLL.

This sequence belongs to the PetM family. In terms of assembly, the 4 large subunits of the cytochrome b6-f complex are cytochrome b6, subunit IV (17 kDa polypeptide, PetD), cytochrome f and the Rieske protein, while the 4 small subunits are PetG, PetL, PetM and PetN. The complex functions as a dimer.

The protein resides in the cellular thylakoid membrane. In terms of biological role, component of the cytochrome b6-f complex, which mediates electron transfer between photosystem II (PSII) and photosystem I (PSI), cyclic electron flow around PSI, and state transitions. In Prochlorococcus marinus (strain MIT 9301), this protein is Cytochrome b6-f complex subunit 7.